Reading from the N-terminus, the 424-residue chain is Glutamyl-tRNA reductase (424 aa).

Substrate contacts are provided by residues 53–56 (TCNR), Ser-111, 116–118 (EPQ), and Gln-122. The active-site Nucleophile is the Cys-54. Residue 191-196 (GAGEMI) coordinates NADP(+).

This sequence belongs to the glutamyl-tRNA reductase family. Homodimer.

The catalysed reaction is (S)-4-amino-5-oxopentanoate + tRNA(Glu) + NADP(+) = L-glutamyl-tRNA(Glu) + NADPH + H(+). It participates in porphyrin-containing compound metabolism; protoporphyrin-IX biosynthesis; 5-aminolevulinate from L-glutamyl-tRNA(Glu): step 1/2. Functionally, catalyzes the NADPH-dependent reduction of glutamyl-tRNA(Glu) to glutamate 1-semialdehyde (GSA). In Bordetella bronchiseptica (strain ATCC BAA-588 / NCTC 13252 / RB50) (Alcaligenes bronchisepticus), this protein is Glutamyl-tRNA reductase.